The sequence spans 499 residues: Cytochrome P450 11B1, mitochondrial (499 aa).

A mitochondrion-targeting transit peptide spans 1–24; sequence MALRVTADVWLARPWQCLHRTRAL. Residue C446 participates in heme binding.

It belongs to the cytochrome P450 family. Heme is required as a cofactor. In terms of tissue distribution, adrenal zona fasciculata/reticularis.

The protein resides in the mitochondrion inner membrane. The enzyme catalyses a steroid + 2 reduced [adrenodoxin] + O2 + 2 H(+) = an 11beta-hydroxysteroid + 2 oxidized [adrenodoxin] + H2O. It catalyses the reaction 21-hydroxyprogesterone + 2 reduced [adrenodoxin] + O2 + 2 H(+) = corticosterone + 2 oxidized [adrenodoxin] + H2O. The catalysed reaction is 21-hydroxyprogesterone + 2 reduced [adrenodoxin] + O2 + 2 H(+) = 18-hydroxy-11-deoxycorticosterone + 2 oxidized [adrenodoxin] + H2O. It carries out the reaction 21-hydroxyprogesterone + 2 reduced [adrenodoxin] + O2 + 2 H(+) = 19-hydroxy-11-deoxycorticosterone + 2 oxidized [adrenodoxin] + H2O. The enzyme catalyses 11-deoxycortisol + 2 reduced [adrenodoxin] + O2 + 2 H(+) = cortisol + 2 oxidized [adrenodoxin] + H2O. It catalyses the reaction cortisol + 2 reduced [adrenodoxin] + O2 + 2 H(+) = 18-hydroxycortisol + 2 oxidized [adrenodoxin] + H2O. The catalysed reaction is 11-deoxycortisol + 2 reduced [adrenodoxin] + O2 + 2 H(+) = 18-hydroxy-11-deoxycortisol + 2 oxidized [adrenodoxin] + H2O. It functions in the pathway steroid biosynthesis; glucocorticoid biosynthesis. Its pathway is steroid hormone biosynthesis. Its function is as follows. A cytochrome P450 monooxygenase involved in the biosynthesis of adrenal corticoids. Catalyzes a variety of reactions that are essential for many species, including detoxification, defense, and the formation of endogenous chemicals like steroid hormones. Steroid 11beta, 18- and 19-hydroxylase with preferred regioselectivity at 11beta, then 18, and lastly 19. Catalyzes the hydroxylation of 11-deoxycortisol and 11-deoxycorticosterone (21-hydroxyprogesterone) at 11beta position, yielding cortisol or corticosterone, respectively, but cannot produce aldosterone. Mechanistically, uses molecular oxygen inserting one oxygen atom into a substrate for hydroxylation and reducing the second into a water molecule. Two electrons are provided by NADPH via a two-protein mitochondrial transfer system comprising flavoprotein FDXR (adrenodoxin/ferredoxin reductase) and nonheme iron-sulfur protein FDX1 or FDX2 (adrenodoxin/ferredoxin). Due to its lack of 18-oxidation activity, it is incapable of generating aldosterone. Could also be involved in the androgen metabolic pathway. This Rattus norvegicus (Rat) protein is Cytochrome P450 11B1, mitochondrial (Cyp11b1).